The sequence spans 580 residues: (3S,6E)-nerolidol synthase 1, chloroplastic (580 aa).

The transit peptide at 1-31 (MASSSWAFFKVFNPQIAPKSISHIGQSDLMQ) directs the protein to the chloroplast. 5 residues coordinate Mg(2+): aspartate 334, aspartate 338, aspartate 478, serine 482, and glutamate 486. Positions 334-338 (DDIFD) match the DDXXD motif motif.

It belongs to the terpene synthase family. Tpsg subfamily. The cofactor is Mg(2+). Mn(2+) is required as a cofactor.

The protein localises to the plastid. It is found in the chloroplast. The catalysed reaction is (2E,6E)-farnesyl diphosphate + H2O = (3S,6E)-nerolidol + diphosphate. It functions in the pathway secondary metabolite biosynthesis; terpenoid biosynthesis. In terms of biological role, involved in monoterpene (C10) and sesquiterpene (C15) biosynthesis. Converts geranyl diphosphate (GPP) into S-linalool and farnesyl diphosphate (FPP) into (3S)-E-nerolidol. Probably not expressed in wild strawberry species. The polypeptide is (3S,6E)-nerolidol synthase 1, chloroplastic (Fragaria vesca (Woodland strawberry)).